The sequence spans 486 residues: ATP synthase subunit beta (486 aa).

Positions 1 to 12 are enriched in basic and acidic residues; it reads MTTTAEKTDRPG. Residues 1 to 22 are disordered; that stretch reads MTTTAEKTDRPGKPGSSDTSGR. 171 to 178 lines the ATP pocket; that stretch reads GGAGVGKT.

The protein belongs to the ATPase alpha/beta chains family. In terms of assembly, F-type ATPases have 2 components, CF(1) - the catalytic core - and CF(0) - the membrane proton channel. CF(1) has five subunits: alpha(3), beta(3), gamma(1), delta(1), epsilon(1). CF(0) has three main subunits: a(1), b(2) and c(9-12). The alpha and beta chains form an alternating ring which encloses part of the gamma chain. CF(1) is attached to CF(0) by a central stalk formed by the gamma and epsilon chains, while a peripheral stalk is formed by the delta and b chains.

It is found in the cell membrane. The enzyme catalyses ATP + H2O + 4 H(+)(in) = ADP + phosphate + 5 H(+)(out). Functionally, produces ATP from ADP in the presence of a proton gradient across the membrane. The catalytic sites are hosted primarily by the beta subunits. The polypeptide is ATP synthase subunit beta (Mycobacterium tuberculosis (strain ATCC 25177 / H37Ra)).